A 289-amino-acid polypeptide reads, in one-letter code: Urease accessory protein UreD (289 aa).

Belongs to the UreD family. As to quaternary structure, ureD, UreF and UreG form a complex that acts as a GTP-hydrolysis-dependent molecular chaperone, activating the urease apoprotein by helping to assemble the nickel containing metallocenter of UreC. The UreE protein probably delivers the nickel.

Its subcellular location is the cytoplasm. Its function is as follows. Required for maturation of urease via the functional incorporation of the urease nickel metallocenter. In Magnetococcus marinus (strain ATCC BAA-1437 / JCM 17883 / MC-1), this protein is Urease accessory protein UreD.